The following is a 569-amino-acid chain: MRVSKYLLSTQKETPADAEVISHQLMLRAGMIRRNASGLYSWLPTGLRVLRKIEAIVREEMNKAGSVEILMPMVQPADLWVETGRFEKFGPELLRFQDRHNRDFVLGPTHEEVITDIVRKEVNSYKQLPLNLFQIQTKFRDEVRPRFGVMRSREFLMKDAYSFHLDQETMDETYESMFQAYSNILTRLGLAFRPVIADTGSIGGSMSHEFHVLANSGEDLIAYSTGSDYAANIEKAESPMPTQTRGEATQEMSLVDTPNAKTIAELVEQHGVAIEKTVKTLIVKGSSEEAPLVALVIRGDHDLNEVKAEKIPAVHAPFEFADEADIRKAVGAGPGSIGPVGLEIPVYIDHGVSVMSDFAAGANQDNKHLFGINWERNLPQAEAFDLRNIIEGEASPCGQGTIALLRGIEVGHIFQLGKNYSEAMNANVLDQNGKAQTLLMGCYGVGVSRMVAAAIEQNHDDRGIIWPDAIAPFRVGILPMNMHKSHRVQDMAEQLYKDLSDAGIEVLFDDRKERAGVMFADMELIGLPHVVVIGDRNIDAGVFEYKNRRTGEKQEVPFDQIVEFLKSAQ.

This sequence belongs to the class-II aminoacyl-tRNA synthetase family. ProS type 1 subfamily. In terms of assembly, homodimer.

The protein localises to the cytoplasm. It carries out the reaction tRNA(Pro) + L-proline + ATP = L-prolyl-tRNA(Pro) + AMP + diphosphate. Its function is as follows. Catalyzes the attachment of proline to tRNA(Pro) in a two-step reaction: proline is first activated by ATP to form Pro-AMP and then transferred to the acceptor end of tRNA(Pro). As ProRS can inadvertently accommodate and process non-cognate amino acids such as alanine and cysteine, to avoid such errors it has two additional distinct editing activities against alanine. One activity is designated as 'pretransfer' editing and involves the tRNA(Pro)-independent hydrolysis of activated Ala-AMP. The other activity is designated 'posttransfer' editing and involves deacylation of mischarged Ala-tRNA(Pro). The misacylated Cys-tRNA(Pro) is not edited by ProRS. The protein is Proline--tRNA ligase of Shewanella woodyi (strain ATCC 51908 / MS32).